The sequence spans 527 residues: MSDTLTADVIGRRVEVNGEHATVRFAGVVPPVAGPWLGVEWDNPERGKHDGSHEGTVYFKCRHPTGGSFIRPNKVNFGTDFLTAIKNRYVLEDGPEEDRKEQIVTIGNKPVETIGFDSIMKQQSQLSKLQEVSLRNCAVSCAGEKGGVAEACPNIRKVDLSKNLLSSWDEVIHIADQLRHLEVLNVSENKLKFPSGSVLTGTLSVLKVLVLNQTGITWAEVLRCVAGCPGLEELYLESNNIFISERPTDVLQTVKLLDLSSNQLIDENQLYLIAHLPRLEQLILSDTGISSLHFPDAGIGCKTSMFPSLKYLVVNDNQISQWSFFNELEKLPSLRALSCLRNPLTKEDKEAETARLLIIASIGQLKTLNKCEILPEERRRAELDYRKAFGNEWKQAGGHKDPEKNRLSEEFLTAHPRYQFLCLKYGAPEDWELKTQQPLMLKNQLLTLKIKYPHQLDQKVLEKQLPGSMTIQKVKGLLSRLLKVPVSDLLLSYESPKKPGREIELENDLKSLQFYSVENGDCLLVRW.

Ser2 is subject to N-acetylserine. The region spanning 27–71 is the CAP-Gly domain; that stretch reads GVVPPVAGPWLGVEWDNPERGKHDGSHEGTVYFKCRHPTGGSFIR. LRR repeat units lie at residues 154 to 175, 180 to 200, 205 to 226, 230 to 252, 253 to 274, 278 to 299, and 308 to 329; these read NIRK…IHIA, HLEV…SVLT, VLKV…RCVA, GLEE…DVLQ, TVKL…YLIA, RLEQ…DAGI, and SLKY…NELE. In terms of domain architecture, LRRCT spans 342–384; that stretch reads NPLTKEDKEAETARLLIIASIGQLKTLNKCEILPEERRRAELD. Lys463 bears the N6-acetyllysine mark. At Ser495 the chain carries Phosphoserine.

It belongs to the TBCE family. Supercomplex made of cofactors A to E. Cofactors A and D function by capturing and stabilizing tubulin in a quasi-native conformation. Cofactor E binds to the cofactor D-tubulin complex; interaction with cofactor C then causes the release of tubulin polypeptides that are committed to the native state. Cofactors B and E can form a heterodimer which binds to alpha-tubulin and enhances their ability to dissociate tubulin heterodimers. Interacts with TBCD.

The protein resides in the cytoplasm. It localises to the cytoskeleton. Its function is as follows. Tubulin-folding protein; involved in the second step of the tubulin folding pathway and in the regulation of tubulin heterodimer dissociation. Required for correct organization of microtubule cytoskeleton and mitotic splindle, and maintenance of the neuronal microtubule network. The chain is Tubulin-specific chaperone E (TBCE) from Homo sapiens (Human).